We begin with the raw amino-acid sequence, 99 residues long: Aspartyl/glutamyl-tRNA(Asn/Gln) amidotransferase subunit C (99 aa).

It belongs to the GatC family. As to quaternary structure, heterotrimer of A, B and C subunits.

The catalysed reaction is L-glutamyl-tRNA(Gln) + L-glutamine + ATP + H2O = L-glutaminyl-tRNA(Gln) + L-glutamate + ADP + phosphate + H(+). It carries out the reaction L-aspartyl-tRNA(Asn) + L-glutamine + ATP + H2O = L-asparaginyl-tRNA(Asn) + L-glutamate + ADP + phosphate + 2 H(+). Its function is as follows. Allows the formation of correctly charged Asn-tRNA(Asn) or Gln-tRNA(Gln) through the transamidation of misacylated Asp-tRNA(Asn) or Glu-tRNA(Gln) in organisms which lack either or both of asparaginyl-tRNA or glutaminyl-tRNA synthetases. The reaction takes place in the presence of glutamine and ATP through an activated phospho-Asp-tRNA(Asn) or phospho-Glu-tRNA(Gln). The polypeptide is Aspartyl/glutamyl-tRNA(Asn/Gln) amidotransferase subunit C (Corynebacterium glutamicum (strain R)).